The following is a 101-amino-acid chain: Ubiquitin-related modifier 1 (101 aa).

Glycine 101 bears the 1-thioglycine mark. Residue glycine 101 forms a Glycyl lysine isopeptide (Gly-Lys) (interchain with K-? in acceptor proteins) linkage.

Belongs to the URM1 family. In terms of processing, C-terminal thiocarboxylation occurs in 2 steps, it is first acyl-adenylated (-COAMP) via the hesA/moeB/thiF part of UBA4, then thiocarboxylated (-COSH) via the rhodanese domain of UBA4.

Its subcellular location is the cytoplasm. It functions in the pathway tRNA modification; 5-methoxycarbonylmethyl-2-thiouridine-tRNA biosynthesis. Acts as a sulfur carrier required for 2-thiolation of mcm(5)S(2)U at tRNA wobble positions of cytosolic tRNA(Lys), tRNA(Glu) and tRNA(Gln). Serves as sulfur donor in tRNA 2-thiolation reaction by being thiocarboxylated (-COSH) at its C-terminus by the MOCS3 homolog UBA4. The sulfur is then transferred to tRNA to form 2-thiolation of mcm(5)S(2)U. Prior mcm(5) tRNA modification by the elongator complex is required for 2-thiolation. Also acts as a ubiquitin-like protein (UBL) that is covalently conjugated via an isopeptide bond to lysine residues of target proteins such as AHP1. The thiocarboxylated form serves as substrate for conjugation and oxidative stress specifically induces the formation of UBL-protein conjugates. This is Ubiquitin-related modifier 1 from Kluyveromyces lactis (strain ATCC 8585 / CBS 2359 / DSM 70799 / NBRC 1267 / NRRL Y-1140 / WM37) (Yeast).